Reading from the N-terminus, the 338-residue chain is Cytochrome f (338 aa).

A signal peptide spans 1 to 45 (MNFKVCSFPSRRQSIAAFVRVLMVILLTLGALVSSDVLLPQPAAA). Heme contacts are provided by tyrosine 46, cysteine 66, cysteine 69, and histidine 70. The helical transmembrane segment at 300–316 (IAFLAAITLTQILLVLK) threads the bilayer.

Belongs to the cytochrome f family. The 4 large subunits of the cytochrome b6-f complex are cytochrome b6, subunit IV (17 kDa polypeptide, PetD), cytochrome f and the Rieske protein, while the 4 small subunits are PetG, PetL, PetM and PetN. The complex functions as a dimer. It depends on heme as a cofactor.

The protein localises to the cellular thylakoid membrane. Functionally, component of the cytochrome b6-f complex, which mediates electron transfer between photosystem II (PSII) and photosystem I (PSI), cyclic electron flow around PSI, and state transitions. The sequence is that of Cytochrome f (petA) from Leptolyngbya laminosa (Phormidium laminosum).